A 479-amino-acid polypeptide reads, in one-letter code: D-aminoacyl-tRNA deacylase (479 aa).

The protein belongs to the DtdA deacylase family. As to quaternary structure, monomer. It depends on Zn(2+) as a cofactor.

The enzyme catalyses a D-aminoacyl-tRNA + H2O = a tRNA + a D-alpha-amino acid + H(+). It carries out the reaction glycyl-tRNA(Ala) + H2O = tRNA(Ala) + glycine + H(+). In terms of biological role, D-aminoacyl-tRNA deacylase with broad substrate specificity. By recycling D-aminoacyl-tRNA to D-amino acids and free tRNA molecules, this enzyme counteracts the toxicity associated with the formation of D-aminoacyl-tRNA entities in vivo. This chain is D-aminoacyl-tRNA deacylase, found in Methanococcoides burtonii (strain DSM 6242 / NBRC 107633 / OCM 468 / ACE-M).